We begin with the raw amino-acid sequence, 359 residues long: Ornithine cyclodeaminase (359 aa).

L-ornithine is bound by residues arginine 53 and lysine 77. Residues threonine 92, arginine 120, 147 to 148 (AQ), aspartate 169, threonine 209, 232 to 235 (VGGD), lysine 239, and serine 300 contribute to the NAD(+) site. Arginine 120 is a binding site for L-ornithine. Position 235 (aspartate 235) interacts with L-ornithine. Aspartate 235 acts as the Proton donor/acceptor in catalysis. Residue valine 301 coordinates L-ornithine.

This sequence belongs to the ornithine cyclodeaminase/mu-crystallin family. Requires NAD(+) as cofactor.

It carries out the reaction L-ornithine = L-proline + NH4(+). The protein operates within amino-acid biosynthesis; L-proline biosynthesis; L-proline from L-ornithine: step 1/1. Functionally, catalyzes the conversion of L-ornithine into L-proline with release of ammonia. The protein is Ornithine cyclodeaminase of Brucella melitensis biotype 1 (strain ATCC 23456 / CCUG 17765 / NCTC 10094 / 16M).